The sequence spans 269 residues: 5'-nucleotidase SurE (269 aa).

A divalent metal cation contacts are provided by D8, D9, S40, and N95.

The protein belongs to the SurE nucleotidase family. The cofactor is a divalent metal cation.

It is found in the cytoplasm. The catalysed reaction is a ribonucleoside 5'-phosphate + H2O = a ribonucleoside + phosphate. Nucleotidase that shows phosphatase activity on nucleoside 5'-monophosphates. The polypeptide is 5'-nucleotidase SurE (Nitratidesulfovibrio vulgaris (strain DSM 19637 / Miyazaki F) (Desulfovibrio vulgaris)).